Consider the following 122-residue polypeptide: Large ribosomal subunit protein uL14 (122 aa).

It belongs to the universal ribosomal protein uL14 family. In terms of assembly, part of the 50S ribosomal subunit. Forms a cluster with proteins L3 and L19. In the 70S ribosome, L14 and L19 interact and together make contacts with the 16S rRNA in bridges B5 and B8.

Binds to 23S rRNA. Forms part of two intersubunit bridges in the 70S ribosome. This is Large ribosomal subunit protein uL14 from Methylobacterium sp. (strain 4-46).